Consider the following 175-residue polypeptide: Large ribosomal subunit protein uL10 (175 aa).

It belongs to the universal ribosomal protein uL10 family. As to quaternary structure, part of the ribosomal stalk of the 50S ribosomal subunit. The N-terminus interacts with L11 and the large rRNA to form the base of the stalk. The C-terminus forms an elongated spine to which L12 dimers bind in a sequential fashion forming a multimeric L10(L12)X complex.

In terms of biological role, forms part of the ribosomal stalk, playing a central role in the interaction of the ribosome with GTP-bound translation factors. In Psychrobacter sp. (strain PRwf-1), this protein is Large ribosomal subunit protein uL10.